The chain runs to 400 residues: S-adenosylmethionine sensor upstream of mTORC1 (400 aa).

Residues R99, G168, D186, D198, F199, and S240 each coordinate S-adenosyl-L-methionine.

Belongs to the BMT2/SAMTOR family. Interacts with the GATOR1 complex; interaction is disrupted when samtor binds S-adenosyl-L-methionine. Interacts with the KICSTOR complex; interaction is disrupted when samtor binds S-adenosyl-L-methionine.

S-adenosyl-L-methionine-binding protein that acts as an inhibitor of mTORC1 signaling via interaction with the GATOR1 and KICSTOR complexes. Acts as a sensor of S-adenosyl-L-methionine to signal methionine sufficiency to mTORC1: in presence of methionine, binds S-adenosyl-L-methionine, leading to disrupt interaction with the GATOR1 and KICSTOR complexes and promote mTORC1 signaling. Upon methionine starvation, S-adenosyl-L-methionine levels are reduced, thereby promoting the association with GATOR1 and KICSTOR, leading to inhibit mTORC1 signaling. Probably also acts as a S-adenosyl-L-methionine-dependent methyltransferase. The chain is S-adenosylmethionine sensor upstream of mTORC1 from Xenopus tropicalis (Western clawed frog).